The following is a 423-amino-acid chain: MKNPEKPLLLFLILASSLASMATAKSTIEPCSSKDTCNSLLGYTLYTDLKVTEVASLFQVDPVSMLLSNSIDISYPDVENHVLPAKLFLKIPITCSCVDGIRKSLSTHYKTRTSDTLGSIADSVYGGLVSPEQIQVANSETDLSVLDVGTKLVIPLPCACFNGTDESLPALYLSYVVRGIDTMAGIAKRFSTSVTDLTNVNAMGAPDINPGDILAVPLLACSSNFPKYATDYGLIIPNGSYALTAGHCVQCSCVLGSRSMYCEPASISVSCSSMRCRNSNFMLGNITSQQSSSGCKLTTCSYNGFASGTILTTLSMSLQPRCPGPQQLAPLIAPPDNVPKELMYLPSPSPSPSPEFDDIAGGGSSIAAVPAASPGGATVSSSNSIPGNPANGPGGSISIASCPLSYYSFIALLIPIGSCFFVF.

An N-terminal signal peptide occupies residues 1–24; it reads MKNPEKPLLLFLILASSLASMATA. Cystine bridges form between Cys-31–Cys-97, Cys-37–Cys-160, Cys-95–Cys-158, and Cys-97–Cys-160. Residues 107–154 enclose the LysM 1 domain; the sequence is THYKTRTSDTLGSIADSVYGGLVSPEQIQVANSETDLSVLDVGTKLVI. A glycan (N-linked (GlcNAc...) asparagine) is linked at Asn-162. The LysM 2 domain occupies 173 to 216; the sequence is LSYVVRGIDTMAGIAKRFSTSVTDLTNVNAMGAPDINPGDILAV. Cystine bridges form between Cys-221/Cys-253 and Cys-248/Cys-276. Asn-238 carries an N-linked (GlcNAc...) asparagine glycan. An N-linked (GlcNAc...) asparagine glycan is attached at Asn-285. Gly-394 is lipidated: GPI-anchor amidated glycine. A propeptide spans 395–423 (removed in mature form); it reads GSISIASCPLSYYSFIALLIPIGSCFFVF.

As to quaternary structure, interacts with peptidoglycans.

It localises to the cell membrane. Its function is as follows. Required as a cell surface receptor for peptidoglycan (PGN) elicitor signaling leading to innate immunity. Plays an essential role in detecting PGNs and restricting bacterial growth (of Pseudomonas syringae pv. tomato DC3000 for example). The sequence is that of LysM domain-containing GPI-anchored protein 3 (LYM3) from Arabidopsis thaliana (Mouse-ear cress).